A 260-amino-acid polypeptide reads, in one-letter code: Adenosylcobinamide-GDP ribazoletransferase (260 aa).

6 helical membrane-spanning segments follow: residues 40 to 60 (AFPLAGAVLGLLAGAVLFMAY), 64 to 84 (LPPLACAMLAIGALAAMTGAL), 117 to 137 (FAALTLIVFVGLKAALLMTII), 192 to 212 (GIGLAFLVFTLIPAGGFLSLI), 214 to 234 (ALVLATGLLFGFARLCIAKIG), and 240 to 260 (TLGAAQQIGSVAVLAGLVMAL).

Belongs to the CobS family. The cofactor is Mg(2+).

Its subcellular location is the cell inner membrane. The enzyme catalyses alpha-ribazole + adenosylcob(III)inamide-GDP = adenosylcob(III)alamin + GMP + H(+). It catalyses the reaction alpha-ribazole 5'-phosphate + adenosylcob(III)inamide-GDP = adenosylcob(III)alamin 5'-phosphate + GMP + H(+). Its pathway is cofactor biosynthesis; adenosylcobalamin biosynthesis; adenosylcobalamin from cob(II)yrinate a,c-diamide: step 7/7. Its function is as follows. Joins adenosylcobinamide-GDP and alpha-ribazole to generate adenosylcobalamin (Ado-cobalamin). Also synthesizes adenosylcobalamin 5'-phosphate from adenosylcobinamide-GDP and alpha-ribazole 5'-phosphate. This Brucella anthropi (strain ATCC 49188 / DSM 6882 / CCUG 24695 / JCM 21032 / LMG 3331 / NBRC 15819 / NCTC 12168 / Alc 37) (Ochrobactrum anthropi) protein is Adenosylcobinamide-GDP ribazoletransferase.